We begin with the raw amino-acid sequence, 148 residues long: 3-hydroxyacyl-[acyl-carrier-protein] dehydratase FabZ (148 aa).

Residue H48 is part of the active site.

Belongs to the thioester dehydratase family. FabZ subfamily.

The protein resides in the cytoplasm. It catalyses the reaction a (3R)-hydroxyacyl-[ACP] = a (2E)-enoyl-[ACP] + H2O. Involved in unsaturated fatty acids biosynthesis. Catalyzes the dehydration of short chain beta-hydroxyacyl-ACPs and long chain saturated and unsaturated beta-hydroxyacyl-ACPs. The sequence is that of 3-hydroxyacyl-[acyl-carrier-protein] dehydratase FabZ from Acinetobacter baylyi (strain ATCC 33305 / BD413 / ADP1).